Here is a 186-residue protein sequence, read N- to C-terminus: dCTP deaminase (186 aa).

107 to 112 contacts dCTP; it reads KSSYAR. Glu133 functions as the Proton donor/acceptor in the catalytic mechanism. DCTP is bound by residues Gln152, Tyr166, and Gln176.

Belongs to the dCTP deaminase family. Homotrimer.

It catalyses the reaction dCTP + H2O + H(+) = dUTP + NH4(+). Its pathway is pyrimidine metabolism; dUMP biosynthesis; dUMP from dCTP (dUTP route): step 1/2. In terms of biological role, catalyzes the deamination of dCTP to dUTP. The chain is dCTP deaminase from Chloroflexus aggregans (strain MD-66 / DSM 9485).